The chain runs to 395 residues: Transcription termination/antitermination protein NusA (395 aa).

Positions Asn-137 to Ser-201 constitute an S1 motif domain. KH domains lie at Ser-243 to Leu-291 and Lys-331 to Glu-378.

It belongs to the NusA family. As to quaternary structure, monomer. Binds directly to the core enzyme of the DNA-dependent RNA polymerase and to nascent RNA.

It localises to the cytoplasm. Participates in both transcription termination and antitermination. This chain is Transcription termination/antitermination protein NusA, found in Helicobacter pylori (strain J99 / ATCC 700824) (Campylobacter pylori J99).